Reading from the N-terminus, the 377-residue chain is Histidinol-phosphate aminotransferase (377 aa).

Residue Lys-230 is modified to N6-(pyridoxal phosphate)lysine.

Belongs to the class-II pyridoxal-phosphate-dependent aminotransferase family. Histidinol-phosphate aminotransferase subfamily. In terms of assembly, homodimer. It depends on pyridoxal 5'-phosphate as a cofactor.

It carries out the reaction L-histidinol phosphate + 2-oxoglutarate = 3-(imidazol-4-yl)-2-oxopropyl phosphate + L-glutamate. It participates in amino-acid biosynthesis; L-histidine biosynthesis; L-histidine from 5-phospho-alpha-D-ribose 1-diphosphate: step 7/9. The polypeptide is Histidinol-phosphate aminotransferase (Mycobacterium leprae (strain Br4923)).